The following is a 432-amino-acid chain: Glutamate-1-semialdehyde 2,1-aminomutase 2 (432 aa).

The residue at position 268 (Lys-268) is an N6-(pyridoxal phosphate)lysine.

It belongs to the class-III pyridoxal-phosphate-dependent aminotransferase family. HemL subfamily. Homodimer. The cofactor is pyridoxal 5'-phosphate.

Its subcellular location is the cytoplasm. It carries out the reaction (S)-4-amino-5-oxopentanoate = 5-aminolevulinate. It participates in porphyrin-containing compound metabolism; protoporphyrin-IX biosynthesis; 5-aminolevulinate from L-glutamyl-tRNA(Glu): step 2/2. This is Glutamate-1-semialdehyde 2,1-aminomutase 2 from Listeria innocua serovar 6a (strain ATCC BAA-680 / CLIP 11262).